Consider the following 456-residue polypeptide: uncharacterized protein (456 aa).

The TRAM domain maps to 5-63; it reads LVKKGQQISLKIKRLGINGEGIGYYKKLIIFVPGALPKEEVTATITNVTPKFAEGTLQS. [4Fe-4S] cluster contacts are provided by cysteine 76, cysteine 82, cysteine 85, and cysteine 165. The S-adenosyl-L-methionine site is built by glutamine 289, tyrosine 318, aspartate 339, and aspartate 387. Cysteine 414 serves as the catalytic Nucleophile.

The protein belongs to the class I-like SAM-binding methyltransferase superfamily. RNA M5U methyltransferase family.

This is an uncharacterized protein from Enterococcus faecalis (strain ATCC 700802 / V583).